The chain runs to 1023 residues: 2-oxoglutarate dehydrogenase complex component E1 (1023 aa).

The transit peptide at 1–40 directs the protein to the mitochondrion; the sequence is MFHLRTCAAKLRPLTASQTVKTFSQNRPAAARTFGQIRCY. Residue Lys-74 is modified to N6-succinyllysine. Ser-100 bears the Phosphoserine mark. His-143, Asp-156, and Asp-158 together coordinate Ca(2+). Arg-312 lines the thiamine diphosphate pocket. N6-acetyllysine is present on Lys-401. Thiamine diphosphate contacts are provided by Asp-411, Asn-444, and Ile-446. Residues Asp-411, Asn-444, and Ile-446 each coordinate Mg(2+). Lys-534 is covalently cross-linked (Glycyl lysine isopeptide (Lys-Gly) (interchain with G-Cter in ubiquitin)). Lys-564 carries the N6-succinyllysine modification. Gln-676 is a binding site for thiamine diphosphate. Position 970 is an N6-acetyllysine (Lys-970).

This sequence belongs to the alpha-ketoglutarate dehydrogenase family. As to quaternary structure, homodimer. The 2-oxoglutarate dehydrogenase complex is composed of OGDH (2-oxoglutarate dehydrogenase; E1), DLST (dihydrolipoamide succinyltransferase; E2), DLD (dihydrolipoamide dehydrogenase; E3) and the assembly factor KGD4. It contains multiple copies of the three enzymatic components (E1, E2 and E3). In the nucleus, the 2-oxoglutarate dehydrogenase complex associates with KAT2A. Interacts with ABHD11; this interaction maintains the functional lipoylation of the 2-oxoglutarate dehydrogenase complex. Thiamine diphosphate is required as a cofactor. Mg(2+) serves as cofactor.

It localises to the mitochondrion. The protein resides in the nucleus. The catalysed reaction is N(6)-[(R)-lipoyl]-L-lysyl-[protein] + 2-oxoglutarate + H(+) = N(6)-[(R)-S(8)-succinyldihydrolipoyl]-L-lysyl-[protein] + CO2. Its activity is regulated as follows. Calcium ions and ADP stimulate, whereas ATP and NADH reduce catalytic activity. Its function is as follows. 2-oxoglutarate dehydrogenase (E1o) component of the 2-oxoglutarate dehydrogenase complex (OGDHC). Participates in the first step, rate limiting for the overall conversion of 2-oxoglutarate to succinyl-CoA and CO(2) catalyzed by the whole OGDHC. Catalyzes the irreversible decarboxylation of 2-oxoglutarate (alpha-ketoglutarate) via the thiamine diphosphate (ThDP) cofactor and subsequent transfer of the decarboxylated acyl intermediate on an oxidized dihydrolipoyl group that is covalently amidated to the E2 enzyme (dihydrolipoyllysine-residue succinyltransferase or DLST). Plays a key role in the Krebs (citric acid) cycle, which is a common pathway for oxidation of fuel molecules, including carbohydrates, fatty acids, and amino acids. Can catalyze the decarboxylation of 2-oxoadipate in vitro, but at a much lower rate than 2-oxoglutarate. Mainly active in the mitochondrion. A fraction of the 2-oxoglutarate dehydrogenase complex also localizes in the nucleus and is required for lysine succinylation of histones: associates with KAT2A on chromatin and provides succinyl-CoA to histone succinyltransferase KAT2A. In Bos taurus (Bovine), this protein is 2-oxoglutarate dehydrogenase complex component E1.